We begin with the raw amino-acid sequence, 60 residues long: Protein translocase subunit SecE (60 aa).

Residues 1–31 (MFARLIRYFQEARAELARVTWPTREQVVEGT) are Cytoplasmic-facing. Residues 32–52 (QAILLFTLAFMVILGLYDTVF) form a helical membrane-spanning segment. At 53-60 (RFLIGLLR) the chain is on the extracellular side.

The protein belongs to the SecE/SEC61-gamma family. As to quaternary structure, component of the Sec protein translocase complex. Heterotrimer consisting of SecY, SecE and SecG subunits. The heterotrimers can form oligomers, although 1 heterotrimer is thought to be able to translocate proteins. Interacts with SecDF, and other proteins may be involved. The channel interacts with SecA via subunit SecY.

The protein localises to the cell inner membrane. In terms of biological role, essential subunit of the protein translocation channel SecYEG. Clamps together the 2 halves of SecY. May contact the channel plug during translocation. This Thermus thermophilus (strain ATCC 27634 / DSM 579 / HB8) protein is Protein translocase subunit SecE.